An 82-amino-acid chain; its full sequence is Kappa-actitoxin-Avd4j (82 aa).

Residues 1–19 (MNKALFLCLVVLCAAVVFA) form the signal peptide. A propeptide spanning residues 20–31 (AEDLQKAKHAPF) is cleaved from the precursor. 3 disulfides stabilise this stretch: cysteine 38/cysteine 73, cysteine 40/cysteine 66, and cysteine 56/cysteine 74.

The protein belongs to the sea anemone type 3 (BDS) potassium channel toxin family. Weakly expressed in the ectodermal tissue from the distal and proximal tentacles, body wall, and oral disk.

The protein localises to the secreted. Its subcellular location is the nematocyst. In terms of biological role, blocks Kv3 voltage-gated potassium channels. Reduces blood pressure. The polypeptide is Kappa-actitoxin-Avd4j (Anemonia viridis (Snakelocks anemone)).